The chain runs to 188 residues: Peptidyl-tRNA hydrolase (188 aa).

Tyr16 contacts tRNA. The active-site Proton acceptor is His21. Residues Phe66, Asn68, and Asn114 each coordinate tRNA.

It belongs to the PTH family. In terms of assembly, monomer.

The protein resides in the cytoplasm. The enzyme catalyses an N-acyl-L-alpha-aminoacyl-tRNA + H2O = an N-acyl-L-amino acid + a tRNA + H(+). Functionally, hydrolyzes ribosome-free peptidyl-tRNAs (with 1 or more amino acids incorporated), which drop off the ribosome during protein synthesis, or as a result of ribosome stalling. Catalyzes the release of premature peptidyl moieties from peptidyl-tRNA molecules trapped in stalled 50S ribosomal subunits, and thus maintains levels of free tRNAs and 50S ribosomes. This chain is Peptidyl-tRNA hydrolase, found in Citrifermentans bemidjiense (strain ATCC BAA-1014 / DSM 16622 / JCM 12645 / Bem) (Geobacter bemidjiensis).